Consider the following 173-residue polypeptide: Urease accessory protein UreE (173 aa).

Residues 136–173 (PEGGAYAGSGQDHHDHSHGEHTQGEHTHDEAAEPHHHG) are disordered. The span at 146-173 (QDHHDHSHGEHTQGEHTHDEAAEPHHHG) shows a compositional bias: basic and acidic residues.

This sequence belongs to the UreE family.

The protein resides in the cytoplasm. Functionally, involved in urease metallocenter assembly. Binds nickel. Probably functions as a nickel donor during metallocenter assembly. This Beijerinckia indica subsp. indica (strain ATCC 9039 / DSM 1715 / NCIMB 8712) protein is Urease accessory protein UreE.